Here is a 517-residue protein sequence, read N- to C-terminus: GMP synthase [glutamine-hydrolyzing] (517 aa).

Positions Arg9–Leu199 constitute a Glutamine amidotransferase type-1 domain. Catalysis depends on Cys86, which acts as the Nucleophile. Catalysis depends on residues His173 and Glu175. The GMPS ATP-PPase domain maps to Trp200–Arg392. Residue Ser227–Ser233 participates in ATP binding.

As to quaternary structure, homodimer.

It carries out the reaction XMP + L-glutamine + ATP + H2O = GMP + L-glutamate + AMP + diphosphate + 2 H(+). The protein operates within purine metabolism; GMP biosynthesis; GMP from XMP (L-Gln route): step 1/1. In terms of biological role, catalyzes the synthesis of GMP from XMP. The polypeptide is GMP synthase [glutamine-hydrolyzing] (Vibrio campbellii (strain ATCC BAA-1116)).